The chain runs to 156 residues: Cellulose synthase operon protein D (156 aa).

It functions in the pathway glycan metabolism; bacterial cellulose biosynthesis. Functionally, may have a major role in the perfection of crystallization, involved either in the pore structure itself or in the organization of the pores within the linear array of terminal synthesizing complexes (TCs). This chain is Cellulose synthase operon protein D, found in Komagataeibacter xylinus (Gluconacetobacter xylinus).